The sequence spans 138 residues: Iron sulfur cluster assembly protein 1 (138 aa).

It belongs to the NifU family. In terms of assembly, component of the core Fe-S cluster (ISC) assembly machinery. The cofactor is [2Fe-2S] cluster.

It is found in the cytoplasm. It functions in the pathway cofactor biosynthesis; iron-sulfur cluster biosynthesis. Its function is as follows. Scaffold protein for the de novo synthesis of iron-sulfur (Fe-S) clusters within mitosomes, which is required for maturation of both [2Fe-2S] and [4Fe-4S] proteins. First, a [2Fe-2S] cluster is transiently assembled on the scaffold protein ISU1. In a second step, the cluster is released from ISU1, transferred to a glutaredoxin, followed by the formation of [2Fe-2S] proteins, the synthesis of [4Fe-4S] clusters and their target-specific insertion into the recipient apoproteins. Cluster assembly on ISU1 depends on the function of the cysteine desulfurase complex NFS1-ISD11, which serves as the sulfur donor for cluster synthesis, the iron-binding protein frataxin as the putative iron donor, and the electron transfer chain comprised of ferredoxin reductase and ferredoxin, which receive their electrons from NADH. The polypeptide is Iron sulfur cluster assembly protein 1 (ISU1) (Trachipleistophora hominis (Microsporidian parasite)).